The chain runs to 490 residues: Metal cation symporter ZIP14 (490 aa).

Residues 1-28 (MKLLHPAFQSCLLLTLLGLWRTTPEAHA) form the signal peptide. Residues 29-155 (SSPGAPAISA…PSAVEVWGYG (127 aa)) lie on the Extracellular side of the membrane. Residues Asn-75, Asn-85, and Asn-100 are each glycosylated (N-linked (GlcNAc...) asparagine). A helical membrane pass occupies residues 156–176 (LLCVTVISLCSLLGASVVPFM). Topologically, residues 177–184 (KKTFYKRL) are cytoplasmic. The helical transmembrane segment at 185 to 205 (LLYFIALAIGTLYSNALFQLI) threads the bilayer. Residues 206–222 (PEAFGFNPLEDYYVSKS) are Extracellular-facing. The chain crosses the membrane as a helical span at residues 223–243 (AVVFGGFYLFFFTEKILKILL). The Cytoplasmic segment spans residues 244 to 395 (KQKNEHHHGH…LLNAGMSIQQ (152 aa)). The HHHGHXHX-motif signature appears at 249–256 (HHHGHSHY). The XEXPHE-motif signature appears at 374 to 379 (EEFPHE). A helical transmembrane segment spans residues 396–416 (ALFFNFLSACCCYLGLAFGIL). Residues 417–422 (AGSHFS) are Extracellular-facing. Residues 423–443 (ANWIFALAGGMFLYISLADMF) traverse the membrane as a helical segment. At 444–458 (PEMNEVCQEDERKGS) the chain is on the cytoplasmic side. A helical transmembrane segment spans residues 459-479 (ILIPFVIQNLGLLTGFTIMVV). Residues 480 to 490 (LTMYSGQIQIG) are Extracellular-facing.

This sequence belongs to the ZIP transporter (TC 2.A.5) family. In terms of assembly, homotrimer. In terms of processing, ubiquitinated. Ubiquitination occurs upon iron depletion. The ubiquitinated form undergoes proteasomal degradation. N-glycosylated. N-glycosylation at Asn-100 is required for iron-regulated extraction of the transporter from membranes and subsequent proteasomal degradation.

The protein resides in the cell membrane. It is found in the apical cell membrane. Its subcellular location is the basolateral cell membrane. It localises to the early endosome membrane. The protein localises to the late endosome membrane. The protein resides in the lysosome membrane. The catalysed reaction is Zn(2+)(out) + 2 hydrogencarbonate(out) = Zn(2+)(in) + 2 hydrogencarbonate(in). It carries out the reaction Mn(2+)(out) + 2 hydrogencarbonate(out) = Mn(2+)(in) + 2 hydrogencarbonate(in). The enzyme catalyses Fe(2+)(out) + 2 hydrogencarbonate(out) = Fe(2+)(in) + 2 hydrogencarbonate(in). It catalyses the reaction Cd(2+)(out) + 2 hydrogencarbonate(out) = Cd(2+)(in) + 2 hydrogencarbonate(in). Functionally, electroneutral transporter of the plasma membrane mediating the cellular uptake of the divalent metal cations zinc, manganese and iron that are important for tissue homeostasis, metabolism, development and immunity. Functions as an energy-dependent symporter, transporting through the membranes an electroneutral complex composed of a divalent metal cation and two bicarbonate anions. Beside these endogenous cellular substrates, can also import cadmium a non-essential metal which is cytotoxic and carcinogenic. Controls the cellular uptake by the intestinal epithelium of systemic zinc, which is in turn required to maintain tight junctions and the intestinal permeability. Modifies the activity of zinc-dependent phosphodiesterases, thereby indirectly regulating G protein-coupled receptor signaling pathways important for gluconeogenesis and chondrocyte differentiation. Regulates insulin receptor signaling, glucose uptake, glycogen synthesis and gluconeogenesis in hepatocytes through the zinc-dependent intracellular catabolism of insulin. Through zinc cellular uptake also plays a role in the adaptation of cells to endoplasmic reticulum stress. Major manganese transporter of the basolateral membrane of intestinal epithelial cells, it plays a central role in manganese systemic homeostasis through intestinal manganese uptake. Also involved in manganese extracellular uptake by cells of the blood-brain barrier. May also play a role in manganese and zinc homeostasis participating in their elimination from the blood through the hepatobiliary excretion. Also functions in the extracellular uptake of free iron. May also function intracellularly and mediate the transport from endosomes to cytosol of iron endocytosed by transferrin. Plays a role in innate immunity by regulating the expression of cytokines by activated macrophages. The chain is Metal cation symporter ZIP14 from Pongo abelii (Sumatran orangutan).